The primary structure comprises 891 residues: Longitudinals lacking protein, isoform G (891 aa).

Residues 32–97 form the BTB domain; it reads VDCTLAAEGK…MYRGEVNISQ (66 aa). Disordered stretches follow at residues 115-200 and 228-340; these read LSDN…SSVL and SSGP…ASAS. Ser140 bears the Phosphoserine mark. Thr161 carries the post-translational modification Phosphothreonine. A phosphoserine mark is found at Ser162 and Ser168. Low complexity-rich tracts occupy residues 162–175, 228–251, 263–293, and 329–340; these read SGDV…SSSP, SSGP…LTST, TSST…QTTS, and NSATGPNPASAS. A phosphoserine mark is found at Ser372, Ser375, and Ser378. The segment at 446 to 467 is disordered; the sequence is QDAQQRDPQDLSRKENTAPDVA. The segment covering 449 to 462 has biased composition (basic and acidic residues); that stretch reads QQRDPQDLSRKENT. Phosphoserine occurs at positions 696 and 705. Thr706 carries the phosphothreonine modification. 2 positions are modified to phosphoserine: Ser749 and Ser750. The C2H2-type 1; degenerate zinc-finger motif lies at 791 to 813; the sequence is YECRHCGKKYRWKSTLRRHENVE. Residues 821 to 843 form a C2H2-type 2 zinc finger; that stretch reads HQCPYCPYKSKQRGNLGVHVRKH. The tract at residues 840–891 is disordered; sequence VRKHHTDLPQLPSKRRSKYSMNRENGMSGSMSDDSQGKLIIDFNGKGELETK. Ser874 is modified (phosphoserine).

As to expression, expressed in both mesoderm and ectoderm with expression highest in the mesectoderm by stage 11. Becomes enriched in a cluster of brain cells, in abdominal histoblasts, and in the embryonic imaginal disks during later stages.

It localises to the nucleus. Putative transcription factor required for axon growth and guidance in the central and peripheral nervous systems. Repels CNS axons away from the midline by promoting the expression of the midline repellent sli and its receptor robo. The polypeptide is Longitudinals lacking protein, isoform G (Drosophila melanogaster (Fruit fly)).